Here is a 295-residue protein sequence, read N- to C-terminus: Lipase 2 (295 aa).

The first 31 residues, 1 to 31 (MPKPALRRVMTATVAAVGTLALGLTDATAHA), serve as a signal peptide directing secretion. Ser48 acts as the Nucleophile in catalysis. Cystine bridges form between Cys65–Cys89, Cys138–Cys152, and Cys205–Cys254. His275 is a catalytic residue.

It belongs to the 'GDSL' lipolytic enzyme family. As to quaternary structure, monomer.

Its subcellular location is the secreted. It carries out the reaction a triacylglycerol + H2O = a diacylglycerol + a fatty acid + H(+). Its activity is regulated as follows. Strongly inhibited by Ag(+). The cations Ca(2+) and Mg(2+) do not significantly reduce the lipolytic activity of SCO7513, whereas high concentrations of Co(2+) and Cu(2+) partially inhibit it. Is not inhibited by DTT in vitro. Is resistant to PMSF inhibition, except in the presence of Ca(2+). Functionally, catalyzes the hydrolysis of fatty acid esters with a preference for long chain fatty acids (C16-C18). This is Lipase 2 from Streptomyces coelicolor (strain ATCC BAA-471 / A3(2) / M145).